Reading from the N-terminus, the 236-residue chain is Purine nucleoside phosphorylase DeoD-type (236 aa).

Residue His5 participates in a purine D-ribonucleoside binding. Residues Gly21, Arg25, Arg44, and 88 to 91 (RVGT) each bind phosphate. A purine D-ribonucleoside-binding positions include 180 to 182 (EME) and 204 to 205 (SD). Residue Asp205 is the Proton donor of the active site.

Belongs to the PNP/UDP phosphorylase family. In terms of assembly, homohexamer; trimer of homodimers.

The catalysed reaction is a purine D-ribonucleoside + phosphate = a purine nucleobase + alpha-D-ribose 1-phosphate. It catalyses the reaction a purine 2'-deoxy-D-ribonucleoside + phosphate = a purine nucleobase + 2-deoxy-alpha-D-ribose 1-phosphate. In terms of biological role, catalyzes the reversible phosphorolytic breakdown of the N-glycosidic bond in the beta-(deoxy)ribonucleoside molecules, with the formation of the corresponding free purine bases and pentose-1-phosphate. The polypeptide is Purine nucleoside phosphorylase DeoD-type (Shewanella baltica (strain OS155 / ATCC BAA-1091)).